The following is a 360-amino-acid chain: Serine/threonine-protein kinase SAPK4 (360 aa).

A Protein kinase domain is found at 4–260 (YEAVRDIGSG…MKEIKSHPWF (257 aa)). Residues 10–18 (IGSGNFGVA) and Lys-33 each bind ATP. Asp-123 (proton acceptor) is an active-site residue. A disordered region spans residues 303-360 (TMPKSSRTGYWSDAGSDEEEKEEEERPEENEEEEEDEYDKRVKEVHASGELRMSSLRI). Residues 317-339 (GSDEEEKEEEERPEENEEEEEDE) show a composition bias toward acidic residues. The segment covering 340-351 (YDKRVKEVHASG) has biased composition (basic and acidic residues).

Belongs to the protein kinase superfamily. Ser/Thr protein kinase family. May be phosphorylated. Expressed in leaf blades, leaf sheaths and roots. Expressed in shoots and roots of young seedlings.

The catalysed reaction is L-seryl-[protein] + ATP = O-phospho-L-seryl-[protein] + ADP + H(+). It catalyses the reaction L-threonyl-[protein] + ATP = O-phospho-L-threonyl-[protein] + ADP + H(+). Its activity is regulated as follows. Activated by hyperosmotic stress. In terms of biological role, may play a role in signal transduction of hyperosmotic response. The polypeptide is Serine/threonine-protein kinase SAPK4 (SAPK4) (Oryza sativa subsp. japonica (Rice)).